Reading from the N-terminus, the 374-residue chain is Ferroptosis suppressor protein 1 (374 aa).

A lipid anchor (N-myristoyl glycine) is attached at glycine 2. A helical transmembrane segment spans residues 13–35; sequence VVIVGGGFAGIAAASQLKSFGIP. Residues 17–21, arginine 53, and valine 81 each bind 6-hydroxy-FAD; that span reads GGGFA. Residue lysine 167 is modified to N6-acetyllysine. Residue aspartate 285 participates in 6-hydroxy-FAD binding.

It belongs to the FAD-dependent oxidoreductase family. It depends on 6-hydroxy-FAD as a cofactor. Post-translationally, N-myristoylation at Gly-2 mediates the recruitment to lipid droplets and plasma membrane. In terms of processing, acetylation at Lys-167 prevents AIFM2 ubiquitination and degradation, thereby inhibiting ferroptosis. KAT2B mediates acetylation at Lys-167, while HDAC3 removes it. Ubiquitinated. AIFM2 undergoes 'Lys-29'-ubiquitination and proteasomal degradation, which is inhibited by acetylation at Lys-167.

It localises to the lipid droplet. It is found in the cell membrane. Its subcellular location is the cytoplasm. The protein resides in the mitochondrion membrane. The protein localises to the nucleus. It carries out the reaction ubiquinone-10 + NADH + H(+) = ubiquinol-10 + NAD(+). It catalyses the reaction phylloquinone + NADH + H(+) = phylloquinol + NAD(+). The catalysed reaction is menaquinone-4 + NADH + H(+) = menaquinol-4 + NAD(+). The enzyme catalyses menadione + NADH + H(+) = menadiol + NAD(+). With respect to regulation, the modification by 4-hydroxy-2-nonenal (HNE) adduction in mitochondria results in loss of the oxidoreductase activity and activation of a novel function in mitochondrial oxidative stress signaling. An NAD(P)H-dependent oxidoreductase that acts as a key inhibitor of ferroptosis. At the plasma membrane, catalyzes reduction of coenzyme Q/ubiquinone-10 to ubiquinol-10, a lipophilic radical-trapping antioxidant that prevents lipid oxidative damage and consequently ferroptosis. Acts in parallel to GPX4 to suppress phospholipid peroxidation and ferroptosis. This anti-ferroptotic function is independent of cellular glutathione levels. Also acts as a potent radical-trapping antioxidant by mediating warfarin-resistant vitamin K reduction in the canonical vitamin K cycle: catalyzes NAD(P)H-dependent reduction of vitamin K (phylloquinone, menaquinone-4 and menadione) to hydroquinone forms. Hydroquinones act as potent radical-trapping antioxidants inhibitor of phospholipid peroxidation and ferroptosis. May play a role in mitochondrial stress signaling. Upon oxidative stress, associates with the lipid peroxidation end product 4-hydroxy-2-nonenal (HNE) forming a lipid adduct devoid of oxidoreductase activity, which then translocates from mitochondria into the nucleus triggering DNA damage and cell death. The protein is Ferroptosis suppressor protein 1 (aifm2) of Xenopus laevis (African clawed frog).